The primary structure comprises 552 residues: Putative pentatricopeptide repeat-containing protein At1g64310 (552 aa).

13 PPR repeats span residues 39–69 (DPYF…FPER), 70–104 (SVFL…DTRP), 105–139 (DNFT…GLGF), 140–170 (DQIC…IPDP), 171–205 (DLAL…GHQP), 206–240 (NCYT…NLDS), 241–271 (HSYV…ISEP), 272–306 (DLVA…GKKP), 307–341 (DCVL…GLEL), 342–372 (DIKV…IPEK), 373–407 (NIVS…GLIP), 408–438 (DEIT…MKSE), and 444–474 (QTEH…LQKP). A type E motif; degenerate region spans residues 479 to 552 (ILGALLSCCE…GGKLPGISWF (74 aa)).

The protein belongs to the PPR family. PCMP-E subfamily.

The sequence is that of Putative pentatricopeptide repeat-containing protein At1g64310 (PCMP-E65) from Arabidopsis thaliana (Mouse-ear cress).